An 81-amino-acid chain; its full sequence is Large ribosomal subunit protein bL31B (81 aa).

This sequence belongs to the bacterial ribosomal protein bL31 family. Type B subfamily. In terms of assembly, part of the 50S ribosomal subunit.

This Borreliella burgdorferi (strain ZS7) (Borrelia burgdorferi) protein is Large ribosomal subunit protein bL31B.